We begin with the raw amino-acid sequence, 788 residues long: Endonuclease MutS2 (788 aa).

334–341 provides a ligand contact to ATP; sequence GPNTGGKT. Residues 713–788 enclose the Smr domain; that stretch reads LDLRGKRYEE…GNGATVVKFQ (76 aa).

Belongs to the DNA mismatch repair MutS family. MutS2 subfamily. As to quaternary structure, homodimer. Binds to stalled ribosomes, contacting rRNA.

Endonuclease that is involved in the suppression of homologous recombination and thus may have a key role in the control of bacterial genetic diversity. In terms of biological role, acts as a ribosome collision sensor, splitting the ribosome into its 2 subunits. Detects stalled/collided 70S ribosomes which it binds and splits by an ATP-hydrolysis driven conformational change. Acts upstream of the ribosome quality control system (RQC), a ribosome-associated complex that mediates the extraction of incompletely synthesized nascent chains from stalled ribosomes and their subsequent degradation. Probably generates substrates for RQC. This Enterococcus faecalis (strain ATCC 700802 / V583) protein is Endonuclease MutS2.